The following is a 175-amino-acid chain: Respiratory supercomplex factor 1-B, mitochondrial (175 aa).

One can recognise an HIG1 domain in the interval aspartate 3–glutamate 94. A run of 2 helical transmembrane segments spans residues proline 30–alanine 46 and isoleucine 66–tyrosine 83. A coiled-coil region spans residues tyrosine 83 to alanine 115.

It belongs to the RCF1 family. In terms of assembly, associates with the respiratory chain complex III/complex IV supercomplex.

The protein localises to the mitochondrion membrane. In terms of biological role, cytochrome c oxidase subunit which plays a role in assembly of respiratory supercomplexes. This Talaromyces marneffei (strain ATCC 18224 / CBS 334.59 / QM 7333) (Penicillium marneffei) protein is Respiratory supercomplex factor 1-B, mitochondrial (rcf1-B).